Consider the following 98-residue polypeptide: Integration host factor subunit alpha (98 aa).

The span at 53 to 69 (DLREKSERPGRNPKTGE) shows a compositional bias: basic and acidic residues. Residues 53-73 (DLREKSERPGRNPKTGEDIPI) form a disordered region.

Belongs to the bacterial histone-like protein family. Heterodimer of an alpha and a beta chain.

Functionally, this protein is one of the two subunits of integration host factor, a specific DNA-binding protein that functions in genetic recombination as well as in transcriptional and translational control. The chain is Integration host factor subunit alpha from Aliivibrio salmonicida (strain LFI1238) (Vibrio salmonicida (strain LFI1238)).